The primary structure comprises 250 residues: Isoprenyl transferase (250 aa).

Residue Asp-27 is part of the active site. Mg(2+) is bound at residue Asp-27. Residues 28 to 31 (GNRR), Trp-32, His-48, and 76 to 78 (STE) each bind substrate. Asn-79 serves as the catalytic Proton acceptor. Residues Phe-80, Arg-82, Arg-199, and 205 to 207 (RVS) contribute to the substrate site. Residue Glu-218 coordinates Mg(2+).

Belongs to the UPP synthase family. As to quaternary structure, homodimer. Requires Mg(2+) as cofactor.

Catalyzes the condensation of isopentenyl diphosphate (IPP) with allylic pyrophosphates generating different type of terpenoids. The polypeptide is Isoprenyl transferase (Chlamydia pneumoniae (Chlamydophila pneumoniae)).